The sequence spans 64 residues: Large ribosomal subunit protein uL29 (64 aa).

This sequence belongs to the universal ribosomal protein uL29 family.

This is Large ribosomal subunit protein uL29 from Dichelobacter nodosus (strain VCS1703A).